We begin with the raw amino-acid sequence, 248 residues long: 2-C-methyl-D-erythritol 4-phosphate cytidylyltransferase (248 aa).

Belongs to the IspD/TarI cytidylyltransferase family. IspD subfamily.

It carries out the reaction 2-C-methyl-D-erythritol 4-phosphate + CTP + H(+) = 4-CDP-2-C-methyl-D-erythritol + diphosphate. Its pathway is isoprenoid biosynthesis; isopentenyl diphosphate biosynthesis via DXP pathway; isopentenyl diphosphate from 1-deoxy-D-xylulose 5-phosphate: step 2/6. Functionally, catalyzes the formation of 4-diphosphocytidyl-2-C-methyl-D-erythritol from CTP and 2-C-methyl-D-erythritol 4-phosphate (MEP). In Corynebacterium efficiens (strain DSM 44549 / YS-314 / AJ 12310 / JCM 11189 / NBRC 100395), this protein is 2-C-methyl-D-erythritol 4-phosphate cytidylyltransferase.